A 246-amino-acid polypeptide reads, in one-letter code: Protein phosphatase PhpP (246 aa).

Positions 2–240 (EISLLTDVGQ…DNITVALVSM (239 aa)) constitute a PPM-type phosphatase domain. Residues D36, G37, D192, and D231 each coordinate Mn(2+).

It belongs to the PP2C family. Interacts with the kinase domain of StkP. Mn(2+) serves as cofactor.

The protein localises to the cytoplasm. The catalysed reaction is O-phospho-L-seryl-[protein] + H2O = L-seryl-[protein] + phosphate. It carries out the reaction O-phospho-L-threonyl-[protein] + H2O = L-threonyl-[protein] + phosphate. Its activity is regulated as follows. Phosphatase activity is inhibited by NaF but not by okadaic acid. Its function is as follows. Protein phosphatase able to dephosphorylate StkP-P and a phosphothreonine residue in a phosphopeptide synthetic substrate. PhpP and its cognate protein kinase StkP appear to constitute a functional signaling couple in vivo, PhpP's primary role probably being to control phosphorylation levels of StkP and of its targets (which include LocZ, DivIVA and KhpB (also called EloR/Jag)). PhpP thus performs an essential control of StkP activity. Overexpression confers an stkP deletion-like phenotype. The sequence is that of Protein phosphatase PhpP (phpP) from Streptococcus pneumoniae.